The sequence spans 154 residues: Small ribosomal subunit protein uS7c (154 aa).

The protein belongs to the universal ribosomal protein uS7 family. In terms of assembly, part of the 30S ribosomal subunit.

It localises to the plastid. The protein resides in the chloroplast. In terms of biological role, one of the primary rRNA binding proteins, it binds directly to 16S rRNA where it nucleates assembly of the head domain of the 30S subunit. The polypeptide is Small ribosomal subunit protein uS7c (rps7) (Pleurastrum terricola (Filamentous green alga)).